We begin with the raw amino-acid sequence, 173 residues long: NADH-ubiquinone oxidoreductase chain 6 (173 aa).

5 helical membrane passes run 1–21 (MVYF…GVAS), 28–48 (AALG…SYGG), 53–73 (LILF…TAAL), 87–107 (VLMY…YFLV), and 139–159 (LGGW…FVVL).

It belongs to the complex I subunit 6 family.

The protein localises to the mitochondrion membrane. It carries out the reaction a ubiquinone + NADH + 5 H(+)(in) = a ubiquinol + NAD(+) + 4 H(+)(out). Its function is as follows. Core subunit of the mitochondrial membrane respiratory chain NADH dehydrogenase (Complex I) that is believed to belong to the minimal assembly required for catalysis. Complex I functions in the transfer of electrons from NADH to the respiratory chain. The immediate electron acceptor for the enzyme is believed to be ubiquinone. In Scyliorhinus canicula (Small-spotted catshark), this protein is NADH-ubiquinone oxidoreductase chain 6 (MT-ND6).